A 206-amino-acid polypeptide reads, in one-letter code: Dephospho-CoA kinase (206 aa).

A DPCK domain is found at 4-200; sequence TVALTGGIGS…ASYLKLASQF (197 aa). ATP is bound at residue 12–17; the sequence is GSGKST.

Belongs to the CoaE family.

The protein localises to the cytoplasm. It catalyses the reaction 3'-dephospho-CoA + ATP = ADP + CoA + H(+). It participates in cofactor biosynthesis; coenzyme A biosynthesis; CoA from (R)-pantothenate: step 5/5. In terms of biological role, catalyzes the phosphorylation of the 3'-hydroxyl group of dephosphocoenzyme A to form coenzyme A. The protein is Dephospho-CoA kinase of Salmonella choleraesuis (strain SC-B67).